The chain runs to 98 residues: NADH-ubiquinone oxidoreductase chain 4L (98 aa).

3 consecutive transmembrane segments (helical) span residues 1–21 (MSMVYFNIFMAFTVSFVGLLM), 29–49 (SLLCLEGMMLSLFVMMSMTIL), and 61–81 (IILLVFAACEAALGLSLLVMV).

The protein belongs to the complex I subunit 4L family. In terms of assembly, core subunit of respiratory chain NADH dehydrogenase (Complex I) which is composed of 45 different subunits.

The protein resides in the mitochondrion inner membrane. It catalyses the reaction a ubiquinone + NADH + 5 H(+)(in) = a ubiquinol + NAD(+) + 4 H(+)(out). Core subunit of the mitochondrial membrane respiratory chain NADH dehydrogenase (Complex I) which catalyzes electron transfer from NADH through the respiratory chain, using ubiquinone as an electron acceptor. Part of the enzyme membrane arm which is embedded in the lipid bilayer and involved in proton translocation. This chain is NADH-ubiquinone oxidoreductase chain 4L (MT-ND4L), found in Arctocephalus australis (South American fur seal).